Consider the following 729-residue polypeptide: 1,4-alpha-glucan branching enzyme GlgB (729 aa).

Aspartate 405 (nucleophile) is an active-site residue. Residue glutamate 458 is the Proton donor of the active site.

This sequence belongs to the glycosyl hydrolase 13 family. GlgB subfamily. As to quaternary structure, monomer.

It catalyses the reaction Transfers a segment of a (1-&gt;4)-alpha-D-glucan chain to a primary hydroxy group in a similar glucan chain.. It functions in the pathway glycan biosynthesis; glycogen biosynthesis. Functionally, catalyzes the formation of the alpha-1,6-glucosidic linkages in glycogen by scission of a 1,4-alpha-linked oligosaccharide from growing alpha-1,4-glucan chains and the subsequent attachment of the oligosaccharide to the alpha-1,6 position. This is 1,4-alpha-glucan branching enzyme GlgB from Mannheimia succiniciproducens (strain KCTC 0769BP / MBEL55E).